The sequence spans 104 residues: Replication restart protein PriB (104 aa).

The SSB domain occupies 1-101 (MTNRLVLSGT…LHAEQIELID (101 aa)).

The protein belongs to the PriB family. Homodimer. Interacts with PriA and DnaT. Component of the replication restart primosome. Primosome assembly occurs via a 'hand-off' mechanism. PriA binds to replication forks, subsequently PriB then DnaT bind; DnaT then displaces ssDNA to generate the helicase loading substrate.

Its function is as follows. Involved in the restart of stalled replication forks, which reloads the replicative helicase on sites other than the origin of replication; the PriA-PriB pathway is the major replication restart pathway. During primosome assembly it facilitates complex formation between PriA and DnaT on DNA; stabilizes PriA on DNA. Stimulates the DNA unwinding activity of PriA helicase. The polypeptide is Replication restart protein PriB (Shigella dysenteriae serotype 1 (strain Sd197)).